The sequence spans 301 residues: 2-dehydropantoate 2-reductase (301 aa).

NADP(+) is bound by residues 11-16 (GAGAMG), Asn107, and Ala133. Asn107 is a substrate binding site. The active-site Proton donor is the Lys187. Substrate-binding residues include Asn191, Asn195, Asn205, and Ser251. Glu263 contributes to the NADP(+) binding site.

This sequence belongs to the ketopantoate reductase family.

The protein localises to the cytoplasm. The enzyme catalyses (R)-pantoate + NADP(+) = 2-dehydropantoate + NADPH + H(+). The protein operates within cofactor biosynthesis; (R)-pantothenate biosynthesis; (R)-pantoate from 3-methyl-2-oxobutanoate: step 2/2. In terms of biological role, catalyzes the NADPH-dependent reduction of ketopantoate into pantoic acid. This chain is 2-dehydropantoate 2-reductase, found in Listeria innocua serovar 6a (strain ATCC BAA-680 / CLIP 11262).